The primary structure comprises 492 residues: Nuclear autoantigenic sperm protein homolog (492 aa).

Over residues Met1–Ala14 the composition is skewed to low complexity. Disordered stretches follow at residues Met1–Arg52 and Asp123–Val254. Residues Thr32 and Thr33 each carry the phosphothreonine modification. The span at Val124–Glu145 shows a compositional bias: acidic residues. 2 stretches are compositionally biased toward basic and acidic residues: residues Gly147–Glu159 and Lys170–Ser179. Residues Ser179 and Ser184 each carry the phosphoserine modification. A Phosphothreonine modification is found at Thr185. The residue at position 193 (Ser193) is a Phosphoserine. A compositionally biased stretch (polar residues) spans Ser226–Asn238. A compositionally biased stretch (acidic residues) spans Val244 to Gly253. TPR repeat units follow at residues Ala284–Leu317 and Ala326–Glu359. The stretch at Met377–Gln400 forms a coiled coil. A compositionally biased stretch (low complexity) spans Ser418 to Ala459. The interval Ser418–Val492 is disordered. Ser478 and Ser485 each carry phosphoserine.

This sequence belongs to the NASP family. As to quaternary structure, interacts with the histone H3-H4 heterodimer; the interaction with H4 is probably indirect and mediated by H3 (His3, His3.3A and His3.3B). Interacts with His2Av; this interaction directly or indirectly destabilizes His2Av.

The protein localises to the cytoplasm. It is found in the nucleus. Its subcellular location is the perinuclear region. In terms of biological role, component of the histone chaperone network. Binds and stabilizes histone H3-H4 not bound to chromatin to maintain a soluble reservoir and modulate degradation by chaperone-mediated autophagy. May also bind and stabilize monomeric H3. Maternal effect gene essential for early embryogenesis. The polypeptide is Nuclear autoantigenic sperm protein homolog (Drosophila melanogaster (Fruit fly)).